The following is a 261-amino-acid chain: Chloroplastic import inner membrane translocase subunit HP30-1 (261 aa).

The next 4 membrane-spanning stretches (helical) occupy residues 59–77 (AAVV…GGLM), 113–129 (NFAA…SVMK), 139–155 (SAVV…SLVS), and 163–180 (MNAI…GVFF).

Belongs to the Tim17/Tim22/Tim23 family. As to quaternary structure, probable component of a protein-conducting channel made of HP30-1, HP30-2 and HP20 that mediates the import of transit sequence-less proteins into the chloroplastic inner membrane. Interacts with CEQORH.

It localises to the plastid. The protein resides in the chloroplast inner membrane. In terms of biological role, together with HP30-2 and HP20, triggers the import and insertion of transit sequence-less multi-pass transmembrane proteins (e.g. CEQORH) into the chloroplastic inner membrane. This is Chloroplastic import inner membrane translocase subunit HP30-1 from Arabidopsis thaliana (Mouse-ear cress).